The primary structure comprises 431 residues: Mitochondrial distribution and morphology protein 12 (431 aa).

The region spanning 1–431 (MSIDLNWETL…VYPSFWTFLV (431 aa)) is the SMP-LTD domain. Disordered regions lie at residues 68–153 (DFYE…GVST) and 209–289 (QSHT…PKPE). Residues 69 to 96 (FYEDLDDDDGGSDEDDEGSNSCQTDEEN) show a composition bias toward acidic residues. The span at 97 to 113 (EAAKTLRERRKMDRVER) shows a compositional bias: basic and acidic residues. The segment covering 115–129 (ANGSSNVSNPPSYTD) has biased composition (polar residues). Low complexity predominate over residues 241-252 (SASTLAVSSSTT).

It belongs to the MDM12 family. Component of the ER-mitochondria encounter structure (ERMES) or MDM complex, composed of mmm1, mdm10, mdm12 and mdm34. A mmm1 homodimer associates with one molecule of mdm12 on each side in a pairwise head-to-tail manner, and the SMP-LTD domains of mmm1 and mdm12 generate a continuous hydrophobic tunnel for phospholipid trafficking.

It is found in the mitochondrion outer membrane. The protein resides in the endoplasmic reticulum membrane. Functionally, component of the ERMES/MDM complex, which serves as a molecular tether to connect the endoplasmic reticulum (ER) and mitochondria. Components of this complex are involved in the control of mitochondrial shape and protein biogenesis, and function in nonvesicular lipid trafficking between the ER and mitochondria. Mdm12 is required for the interaction of the ER-resident membrane protein mmm1 and the outer mitochondrial membrane-resident beta-barrel protein mdm10. The mdm12-mmm1 subcomplex functions in the major beta-barrel assembly pathway that is responsible for biogenesis of all mitochondrial outer membrane beta-barrel proteins, and acts in a late step after the SAM complex. The mdm10-mdm12-mmm1 subcomplex further acts in the TOM40-specific pathway after the action of the mdm12-mmm1 complex. Essential for establishing and maintaining the structure of mitochondria and maintenance of mtDNA nucleoids. The chain is Mitochondrial distribution and morphology protein 12 from Sclerotinia sclerotiorum (strain ATCC 18683 / 1980 / Ss-1) (White mold).